The following is a 90-amino-acid chain: Probable Fe(2+)-trafficking protein (90 aa).

Belongs to the Fe(2+)-trafficking protein family.

Could be a mediator in iron transactions between iron acquisition and iron-requiring processes, such as synthesis and/or repair of Fe-S clusters in biosynthetic enzymes. The chain is Probable Fe(2+)-trafficking protein from Polynucleobacter asymbioticus (strain DSM 18221 / CIP 109841 / QLW-P1DMWA-1) (Polynucleobacter necessarius subsp. asymbioticus).